A 386-amino-acid polypeptide reads, in one-letter code: Leupaxin (386 aa).

At Met1 the chain carries N-acetylmethionine. Residues 3 to 15 (ELDALLEELERST) carry the LD motif 1 motif. Residues 13–41 (RSTLQDSDEYSNPAPLPLDQHSRKETNLD) form a disordered region. Ser19 carries the phosphoserine modification. Tyr22 bears the Phosphotyrosine mark. A Phosphoserine modification is found at Ser54. At Tyr62 the chain carries Phosphotyrosine. Short sequence motifs (LD motif) lie at residues 70–82 (NVYS…KESP) and 92–103 (QLDELMAHLTEM). At Tyr72 the chain carries Phosphotyrosine; by LYN. Ser81 carries the post-translational modification Phosphoserine. 4 LIM zinc-binding domains span residues 150–208 (GHCA…QLFS), 209–267 (PRCA…AMFS), 268–326 (PKCG…HRRG), and 327–386 (TLCH…LFPL).

It belongs to the paxillin family. In terms of assembly, interacts with PTPN22. Interacts with unphosphorylated ITGA4. Interacts with PTK2B/PYK2, PTPN12, AR and SRF. Interacts (via LD motif 3) with LYN and the interaction is induced upon B-cell antigen receptor (BCR) activation. Interacts (via LD motif 3) with PTK2/FAK. Phosphorylated on tyrosine residues. Phosphorylation on Tyr-72 is important for its inhibitory function. Bombesin stimulates phosphorylation on Tyr-22, Tyr-62 and Tyr-72. As to expression, macrophages, monocytes and osteoclasts (at protein level). Strongly expressed in cells and tissues of hematopoietic origin. Highest expression in lymphoid tissues such as spleen, lymph node, thymus and appendix and in the vascular smooth muscle. Lower levels in bone marrow and fetal liver. Also expressed in peripheral blood lymphocytes and a number of hematopoietic cell lines. Very low levels found in epithelial cell lines. Expressed in prostate cancer (PCa) cells and its expression intensity is directly linked to PCa progression.

It localises to the cytoplasm. Its subcellular location is the cell junction. The protein localises to the focal adhesion. The protein resides in the nucleus. It is found in the perinuclear region. It localises to the cell projection. Its subcellular location is the podosome. The protein localises to the cell membrane. In terms of biological role, transcriptional coactivator for androgen receptor (AR) and serum response factor (SRF). Contributes to the regulation of cell adhesion, spreading and cell migration and acts as a negative regulator in integrin-mediated cell adhesion events. Suppresses the integrin-induced tyrosine phosphorylation of paxillin (PXN). May play a critical role as an adapter protein in the formation of the adhesion zone in osteoclasts. Negatively regulates B-cell antigen receptor (BCR) signaling. In Homo sapiens (Human), this protein is Leupaxin (LPXN).